Here is a 93-residue protein sequence, read N- to C-terminus: Islet amyloid polypeptide (93 aa).

The N-terminal stretch at 1 to 23 is a signal peptide; that stretch reads MMCISKLPAVLLILSVALNHLRA. A propeptide spanning residues 24–35 is cleaved from the precursor; the sequence is TPVRSGSNPQMD. A disulfide bridge links cysteine 39 with cysteine 44. Residues 64-93 are disordered; it reads LPPTNVGSNTYGKRNAAGDPNRESLDFLLV. At tyrosine 74 the chain carries Tyrosine amide. Positions 78 to 93 are excised as a propeptide; it reads NAAGDPNRESLDFLLV. A compositionally biased stretch (basic and acidic residues) spans 83-93; sequence PNRESLDFLLV.

This sequence belongs to the calcitonin family. In terms of assembly, can form homodimers. Interacts with IDE and INS. Interaction with INS inhibits homodimerization and fibril formation.

The protein localises to the secreted. Amylin/IAPP is a glucoregulatory peptide hormone that plays an important role in the regulation of energy homeostasis. Selectively inhibits insulin-stimulated glucose utilization and glycogen deposition in muscle, while not affecting adipocyte glucose metabolism. IAPP function is mediated by the CALCR-RAMPs (AMYRs) receptor complexes. Amylin can also bind CALCR receptor in the absence of RAMPs, although it is more selective for AMYRs. In Mus musculus (Mouse), this protein is Islet amyloid polypeptide.